Here is a 214-residue protein sequence, read N- to C-terminus: Adenylate kinase (214 aa).

Residue G10–T15 participates in ATP binding. The NMP stretch occupies residues S30 to V59. AMP contacts are provided by residues T31, R36, Q57–V59, G85–R88, and Q92. The tract at residues G122–D159 is LID. ATP-binding positions include R123 and T132–Y133. The AMP site is built by R156 and R167. Position 200 (K200) interacts with ATP.

The protein belongs to the adenylate kinase family. In terms of assembly, monomer.

It is found in the cytoplasm. The enzyme catalyses AMP + ATP = 2 ADP. The protein operates within purine metabolism; AMP biosynthesis via salvage pathway; AMP from ADP: step 1/1. Its function is as follows. Catalyzes the reversible transfer of the terminal phosphate group between ATP and AMP. Plays an important role in cellular energy homeostasis and in adenine nucleotide metabolism. The polypeptide is Adenylate kinase (Pasteurella multocida (strain Pm70)).